Consider the following 315-residue polypeptide: Homeobox-leucine zipper protein HAT3 (315 aa).

A disordered region spans residues 140–163 (SCSLGGGSDDEDGSGNGDDSSRKK). Residues 159 to 218 (SSRKKLRLSKEQALVLEETFKEHSTLNPKQKMALAKQLNLRTRQVEVWFQNRRARTKLKQ) constitute a DNA-binding region (homeobox). The interval 226-247 (LKRCCENLTDENRRLQKEVSEL) is leucine-zipper. Residues 280-305 (SSSSVAPPVMNSSSPMGPMSPWAAMP) are compositionally biased toward low complexity. Positions 280 to 315 (SSSSVAPPVMNSSSPMGPMSPWAAMPLRQRPAAGSH) are disordered.

This sequence belongs to the HD-ZIP homeobox family. Class II subfamily.

The protein resides in the nucleus. Its function is as follows. Probable transcription factor. This chain is Homeobox-leucine zipper protein HAT3 (HAT3), found in Arabidopsis thaliana (Mouse-ear cress).